The primary structure comprises 205 residues: Small ribosomal subunit protein uS4 (205 aa).

Residues 93-171 (SRVSSVLYRS…SPHYLEVDRE (79 aa)) form the S4 RNA-binding domain.

Belongs to the universal ribosomal protein uS4 family. In terms of assembly, part of the 30S ribosomal subunit. Contacts protein S5. The interaction surface between S4 and S5 is involved in control of translational fidelity.

Its function is as follows. One of the primary rRNA binding proteins, it binds directly to 16S rRNA where it nucleates assembly of the body of the 30S subunit. In terms of biological role, with S5 and S12 plays an important role in translational accuracy. This Neorickettsia sennetsu (strain ATCC VR-367 / Miyayama) (Ehrlichia sennetsu) protein is Small ribosomal subunit protein uS4.